A 324-amino-acid polypeptide reads, in one-letter code: RING-H2 finger protein ATL3 (324 aa).

Residues 24-44 form a helical membrane-spanning segment; that stretch reads IILTAIIVLFMAVLFVLILHL. Residues 127 to 169 form an RING-type; atypical zinc finger; it reads CSICLSELVKGDKARLLPKCNHSFHVECIDMWFQSHSTCPICR. Disordered stretches follow at residues 179-210, 226-248, and 299-324; these read SSKRVEQVPDNAENAGTTNNNHDALSQLSTSS, VSTGNTNVGTQEDGAAGNGASQS, and RDKRVGCSNSSTSNSSSSNAVASVDP. Composition is skewed to polar residues over residues 192–210 and 226–235; these read NAGTTNNNHDALSQLSTSS and VSTGNTNVGT. Residues 306-324 are compositionally biased toward low complexity; sequence SNSSTSNSSSSNAVASVDP.

It belongs to the RING-type zinc finger family. ATL subfamily.

The protein localises to the membrane. It carries out the reaction S-ubiquitinyl-[E2 ubiquitin-conjugating enzyme]-L-cysteine + [acceptor protein]-L-lysine = [E2 ubiquitin-conjugating enzyme]-L-cysteine + N(6)-ubiquitinyl-[acceptor protein]-L-lysine.. It functions in the pathway protein modification; protein ubiquitination. This Arabidopsis thaliana (Mouse-ear cress) protein is RING-H2 finger protein ATL3 (ATL3).